The sequence spans 418 residues: Delta(14)-sterol reductase TM7SF2 (418 aa).

6 helical membrane-spanning segments follow: residues 13 to 35, 62 to 81, 102 to 124, 129 to 148, 255 to 277, and 287 to 304; these read FGGP…HLLL, ALLL…LLPA, GFQA…LPLS, MLLP…SLLL, FGFM…QAQF, and WPLA…YYIF. NADP(+) contacts are provided by residues lysine 311, arginine 315, leucine 338, tryptophan 343, and 350-351; that span reads NY. Residues 355–377 form a helical membrane-spanning segment; it reads LIMALAWSLPCGVFHLLPYFYFL. NADP(+) contacts are provided by residues aspartate 390, 394-398, and tyrosine 405; that span reads CRQKY.

Belongs to the ERG4/ERG24 family. In terms of tissue distribution, highly expressed in liver and brain.

It is found in the microsome membrane. It localises to the endoplasmic reticulum membrane. It catalyses the reaction 4,4-dimethyl-5alpha-cholesta-8,24-dien-3beta-ol + NADP(+) = 4,4-dimethyl-5alpha-cholesta-8,14,24-trien-3beta-ol + NADPH + H(+). The enzyme catalyses 5alpha-cholest-8,14-dien-3beta-ol + NADPH + H(+) = 5alpha-cholest-8-en-3beta-ol + NADP(+). It carries out the reaction 4,4-dimethyl-8,14-cholestadien-3beta-ol + NADPH + H(+) = 4,4-dimethyl-5alpha-cholest-8-en-3beta-ol + NADP(+). It participates in steroid biosynthesis; cholesterol biosynthesis. Catalyzes the reduction of the C14-unsaturated bond of lanosterol, as part of the metabolic pathway leading to cholesterol biosynthesis. This Bos taurus (Bovine) protein is Delta(14)-sterol reductase TM7SF2 (TM7SF2).